We begin with the raw amino-acid sequence, 535 residues long: CTP synthase (535 aa).

An amidoligase domain region spans residues 1-267 (MTKYIFVTGG…DQIVCDHLKL (267 aa)). Serine 13 is a binding site for CTP. Residue serine 13 coordinates UTP. An ATP-binding site is contributed by 14–19 (SLGKGI). Tyrosine 54 lines the L-glutamine pocket. Residue aspartate 71 coordinates ATP. Mg(2+) is bound by residues aspartate 71 and glutamate 141. CTP-binding positions include 148-150 (DIE), 188-193 (KTKPTQ), and lysine 224. UTP contacts are provided by residues 188-193 (KTKPTQ) and lysine 224. 240 to 242 (RDA) contributes to the ATP binding site. The Glutamine amidotransferase type-1 domain occupies 292–534 (KIALVGKYVE…VRASITNKES (243 aa)). Residue glycine 354 participates in L-glutamine binding. Cysteine 381 (nucleophile; for glutamine hydrolysis) is an active-site residue. Residues 382–385 (LGMQ), glutamate 405, and arginine 462 each bind L-glutamine. Residues histidine 507 and glutamate 509 contribute to the active site.

It belongs to the CTP synthase family. Homotetramer.

It catalyses the reaction UTP + L-glutamine + ATP + H2O = CTP + L-glutamate + ADP + phosphate + 2 H(+). The enzyme catalyses L-glutamine + H2O = L-glutamate + NH4(+). It carries out the reaction UTP + NH4(+) + ATP = CTP + ADP + phosphate + 2 H(+). It functions in the pathway pyrimidine metabolism; CTP biosynthesis via de novo pathway; CTP from UDP: step 2/2. With respect to regulation, allosterically activated by GTP, when glutamine is the substrate; GTP has no effect on the reaction when ammonia is the substrate. The allosteric effector GTP functions by stabilizing the protein conformation that binds the tetrahedral intermediate(s) formed during glutamine hydrolysis. Inhibited by the product CTP, via allosteric rather than competitive inhibition. Catalyzes the ATP-dependent amination of UTP to CTP with either L-glutamine or ammonia as the source of nitrogen. Regulates intracellular CTP levels through interactions with the four ribonucleotide triphosphates. The protein is CTP synthase of Bacillus cereus (strain ATCC 14579 / DSM 31 / CCUG 7414 / JCM 2152 / NBRC 15305 / NCIMB 9373 / NCTC 2599 / NRRL B-3711).